A 511-amino-acid chain; its full sequence is Peptide transporter YePEPT (511 aa).

Topologically, residues 1 to 19 (MQTSTNTPGGRTFFGHPYP) are cytoplasmic. Residues 20-45 (LSGLFLSEMWERFSFYGIRPLLILFM) traverse the membrane as a helical segment. The Periplasmic segment spans residues 46–59 (AATVFDGGMGLPRE). Residues 60 to 84 (QASAIVGIFAGSMYLAALPGGLLAD) form a helical membrane-spanning segment. Residues 85 to 88 (NWLG) lie on the Cytoplasmic side of the membrane. A helical membrane pass occupies residues 89–109 (QQRAVWYGSILIALGHLSIAL). Over 110–115 (SAFFGN) the chain is Periplasmic. A helical membrane pass occupies residues 116–138 (DLFFIGLVFIVLGTGLFKTCISV). At 139–149 (MVGTLYKPGDA) the chain is on the cytoplasmic side. Residues 150 to 175 (RRDGGFSLFYMGINMGSFIAPLLSGW) traverse the membrane as a helical segment. Residues 176-181 (LLRTHG) lie on the Periplasmic side of the membrane. A helical membrane pass occupies residues 182–208 (WHWGFGIGGIGMLVALLIFRGFAIPAM). Topologically, residues 209 to 232 (KRYDAEVGLDSSWNKPTNQRQGVG) are cytoplasmic. A helical membrane pass occupies residues 233-253 (RWVTAIMAVVVVIIALISQGV). The Periplasmic portion of the chain corresponds to 254–256 (IPI). The chain crosses the membrane as a helical span at residues 257-279 (NPVMIASLLVYVIAASVTLYFIY). Residues 280-294 (LFAFAKMSRKDRARL) are Cytoplasmic-facing. A helical transmembrane segment spans residues 295 to 321 (LVCFILLVSAAFFWSAFEQKPTSFNLF). Residues 322–335 (ANDYTDRMVMGFEI) lie on the Periplasmic side of the membrane. The chain crosses the membrane as a helical span at residues 336-357 (PTVWFQSINALFIILLAPVFSW). At 358–369 (AWPALAKKKIQP) the chain is on the cytoplasmic side. A helical transmembrane segment spans residues 370–396 (SSITKFVIGILCAAAGFAVMMYAAQHV). Residues 397-405 (LSSGGAGVS) are Periplasmic-facing. The chain crosses the membrane as a helical span at residues 406-426 (PLWLVMSILLLTLGELCLSPI). Residues 427–441 (GLATMTLLAPDRMRG) are Cytoplasmic-facing. The helical transmembrane segment at 442–462 (QVMGLWFCASSLGNLAAGLIG) threads the bilayer. The Periplasmic portion of the chain corresponds to 463 to 471 (GHVKADQLD). Residues 472–496 (MLPTLFARCSIALVICAAVLILLIV) traverse the membrane as a helical segment. The Cytoplasmic segment spans residues 497-511 (PIRRLMNNTQGQQTA).

The protein belongs to the major facilitator superfamily. Proton-dependent oligopeptide transporter (POT/PTR) (TC 2.A.17) family.

It localises to the cell inner membrane. Its activity is regulated as follows. Transport is inhibited by the proton ionophore carbonyl cyanide m-chlorophenylhydrazone (CCCP). Mediates the proton-dependent uptake of dipeptides. Shows higher affinity for dipeptides with a negatively charged amino acid residue at the N-terminal position, such as Asp-Ala and Glu-Ala. Also displays specificity for Ala-Ala, Ala-Tyr and Tyr-Ala. This is Peptide transporter YePEPT from Yersinia enterocolitica subsp. palearctica serotype O:3 (strain YE-P4).